Reading from the N-terminus, the 264-residue chain is Adenosylcobinamide-GDP ribazoletransferase (264 aa).

A run of 6 helical transmembrane segments spans residues 39 to 59 (IAYAVPLAGAAIGLAGAAILI), 63 to 83 (ALGLPNLVAAILAVLTCVLLT), 121 to 141 (ACALVFSLLLRVALLDGLLAL), 148 to 168 (LALIAAASLSRAAGMLLLEFL), 201 to 221 (LLIVPSTGVGATLMAIGLSVL), and 241 to 261 (VAGAVQQLCEIAFLMGVLIYA).

It belongs to the CobS family. Requires Mg(2+) as cofactor.

Its subcellular location is the cell inner membrane. It carries out the reaction alpha-ribazole + adenosylcob(III)inamide-GDP = adenosylcob(III)alamin + GMP + H(+). The enzyme catalyses alpha-ribazole 5'-phosphate + adenosylcob(III)inamide-GDP = adenosylcob(III)alamin 5'-phosphate + GMP + H(+). The protein operates within cofactor biosynthesis; adenosylcobalamin biosynthesis; adenosylcobalamin from cob(II)yrinate a,c-diamide: step 7/7. In terms of biological role, joins adenosylcobinamide-GDP and alpha-ribazole to generate adenosylcobalamin (Ado-cobalamin). Also synthesizes adenosylcobalamin 5'-phosphate from adenosylcobinamide-GDP and alpha-ribazole 5'-phosphate. The protein is Adenosylcobinamide-GDP ribazoletransferase of Azorhizobium caulinodans (strain ATCC 43989 / DSM 5975 / JCM 20966 / LMG 6465 / NBRC 14845 / NCIMB 13405 / ORS 571).